Reading from the N-terminus, the 518-residue chain is MRGALAGLSLATLATASPVLVNSIHNDAAPIISASNAKEIADNYMIKFKDHVTQNLAAEHHGWVQDLHEKTQVAKTELRKRSQSPMVDDIFNGLKHTYNIAGGLMGYAGHFDEDVIEQIRRHPDVELVERDQEVHVLGSESEVEKNAPWGLARISHRDSLSFGTFNKYLYTEDGGEGVDVYVVDTGTNVDHVDFEGRASWGKTIPQGDADEDGNGHGTHCSGTVAGKKYGVAKKAHVKAVKVLRSNGSGSMSDVVKGVEYAAESHLEQVSITKKGKRKGFKGSTANMSLGGGKSPILDKAVNAAVDAGIHFAVAAGNDNADSCNYSPAAAENAVTVGASTLADERAYFSNYGKCNDIFAPGLNIQSTWIGSKYAVNTISGTSMASPHVAGLLAYLLSLQPAKDSAFAVADISPKKLKANLISIATVGALTDVPSNTANILAWNGGGESNYSAIVEKGGYKATHRPTMLEEIESEAKVASKKVYSEGDELAHKVAELTEKVEDLIAGELKDMFRELKRE.

Positions 1 to 16 (MRGALAGLSLATLATA) are cleaved as a signal peptide. Positions 17–138 (SPVLVNSIHN…ERDQEVHVLG (122 aa)) are cleaved as a propeptide — removed in mature form. One can recognise an Inhibitor I9 domain in the interval 44–136 (YMIKFKDHVT…LVERDQEVHV (93 aa)). A Peptidase S8 domain is found at 148-454 (PWGLARISHR…GGESNYSAIV (307 aa)). Active-site charge relay system residues include Asp-184 and His-216. Residues 244-298 (RSNGSGSMSDVVKGVEYAAESHLEQVSITKKGKRKGFKGSTANMSLGGGKSPILD) form an igE-binding region. Residues Asn-246 and Asn-286 are each glycosylated (N-linked (GlcNAc...) asparagine). Ser-382 serves as the catalytic Charge relay system. A glycan (N-linked (GlcNAc...) asparagine) is linked at Asn-449. The propeptide at 460 to 518 (KATHRPTMLEEIESEAKVASKKVYSEGDELAHKVAELTEKVEDLIAGELKDMFRELKRE) is removed in mature form.

The protein belongs to the peptidase S8 family.

Its function is as follows. Serine protease. The chain is Subtilisin-like serine protease Cla h 9.0101 from Davidiella tassiana (Mycosphaerella tassiana).